A 274-amino-acid polypeptide reads, in one-letter code: Large ribosomal subunit protein uL2cz/uL2cy (274 aa).

Disordered stretches follow at residues 1–21 (MAIH…VDSQ) and 224–274 (NPVD…RRSK).

The protein belongs to the universal ribosomal protein uL2 family. In terms of assembly, part of the 50S ribosomal subunit.

The protein resides in the plastid. Its subcellular location is the chloroplast. This is Large ribosomal subunit protein uL2cz/uL2cy (rpl2-A) from Populus trichocarpa (Western balsam poplar).